The chain runs to 201 residues: Regulator of G-protein signaling 16 (201 aa).

Residues cysteine 2 and cysteine 12 are each lipidated (S-palmitoyl cysteine). Residues 64–180 (SFDLLLNSKN…LKSPAYRDLA (117 aa)) enclose the RGS domain. Tyrosine 167 is subject to Phosphotyrosine; by EGFR. Phosphotyrosine is present on tyrosine 176. The tract at residues 181 to 201 (AQASATSTSAPSGSPAEPSHT) is disordered.

In terms of assembly, interacts with GNAI1 and GNAQ. Interacts with GNAI3, GNAI3 and GNAO1. In terms of processing, palmitoylated on Cys-2 and/or Cys-12. Post-translationally, phosphorylated. Phosphorylation at Tyr-167 by EGFR enhances GTPase accelerating (GAP) activity toward GNAI1. Retinal; also predominantly expressed in the liver and pituitary.

The protein resides in the membrane. In terms of biological role, regulates G protein-coupled receptor signaling cascades. Inhibits signal transduction by increasing the GTPase activity of G protein alpha subunits, thereby driving them into their inactive GDP-bound form. Plays an important role in the phototransduction cascade by regulating the lifetime and effective concentration of activated transducin alpha. May regulate extra and intracellular mitogenic signals. The chain is Regulator of G-protein signaling 16 (Rgs16) from Mus musculus (Mouse).